Here is a 398-residue protein sequence, read N- to C-terminus: Cytohesin-1 (398 aa).

An N-acetylmethionine modification is found at methionine 1. A necessary for localization at adherens junction region spans residues 1-60 (MEDDDSYVPSDLTAEERQELENIRRRKQELLADIQRLKEEIAEVANEIESLGSTEERKNM). Residues 10 to 67 (SDLTAEERQELENIRRRKQELLADIQRLKEEIAEVANEIESLGSTEERKNMQRNKQVA) adopt a coiled-coil conformation. The region spanning 73 to 202 (FNMDPKKGIQ…IIMLNTSLHN (130 aa)) is the SEC7 domain. The region spanning 260-377 (NPDREGWLLK…WIKCIKAAIS (118 aa)) is the PH domain. A 1,2-diacyl-sn-glycero-3-phospho-(1D-myo-inositol-3,4,5-trisphosphate) contacts are provided by residues 269 to 277 (KLGGGRVKT), arginine 281, tyrosine 292, arginine 302, and asparagine 351. The segment at 388-396 (RKKKVSSTK) is C-terminal autoinhibitory region.

Interacts with TRIM23 and CYTIP. Interacts (via coiled-coil domain) with FRMD4A (via coiled-coil domain). Interacts with FRMD4B. Found in a complex with PARD3, CYTH1 and FRMD4A. Interacts (via N-terminal domain) with INAVA (via N-terminal domain). In terms of processing, ubiquitinated by SCF(FBXW11) E3 ubiquitin-protein ligase complex. Ubiquitination induces proteasomal degradation. Expressed in colon and small intestine (at protein level).

Its subcellular location is the cell membrane. The protein localises to the cytoplasm. It localises to the cytosol. It is found in the cell junction. The protein resides in the tight junction. Its subcellular location is the adherens junction. In terms of biological role, promotes guanine-nucleotide exchange on ARF1, ARF5 and ARF6. Promotes the activation of ARF factors through replacement of GDP with GTP. Plays an important role in membrane trafficking, during junctional remodeling and epithelial polarization, through regulation of ARF6 activity. This is Cytohesin-1 (Cyth1) from Mus musculus (Mouse).